The sequence spans 267 residues: Distal basal body ring component protein (267 aa).

Positions 1–29 are cleaved as a signal peptide; the sequence is MKAFLFAAAATLVITALSAPAFAGTPVTL.

In terms of assembly, flaD is a subunit of the flagellar transenvelope basal body.

The protein resides in the periplasm. It localises to the bacterial flagellum basal body. FlaD might be the structural protein of the distal basal body ring P, or it is necessary for the assembly of the P ring. The polypeptide is Distal basal body ring component protein (flaD) (Caulobacter vibrioides (strain ATCC 19089 / CIP 103742 / CB 15) (Caulobacter crescentus)).